We begin with the raw amino-acid sequence, 471 residues long: 3-isopropylmalate dehydratase large subunit (471 aa).

[4Fe-4S] cluster is bound by residues C347, C407, and C410.

Belongs to the aconitase/IPM isomerase family. LeuC type 1 subfamily. Heterodimer of LeuC and LeuD. It depends on [4Fe-4S] cluster as a cofactor.

It catalyses the reaction (2R,3S)-3-isopropylmalate = (2S)-2-isopropylmalate. The protein operates within amino-acid biosynthesis; L-leucine biosynthesis; L-leucine from 3-methyl-2-oxobutanoate: step 2/4. Functionally, catalyzes the isomerization between 2-isopropylmalate and 3-isopropylmalate, via the formation of 2-isopropylmaleate. This Vibrio parahaemolyticus serotype O3:K6 (strain RIMD 2210633) protein is 3-isopropylmalate dehydratase large subunit.